The following is a 152-amino-acid chain: Large ribosomal subunit protein eL29 (152 aa).

Basic residues predominate over residues 1–26 (MAKSKNHTTHNQSRKWHRNGIKKPRS). The segment at 1-32 (MAKSKNHTTHNQSRKWHRNGIKKPRSQRYESL) is disordered. Lys5 is subject to N6-methyllysine. Ser31 is subject to Phosphoserine. Lys33 carries the post-translational modification N6-acetyllysine. The segment at 119–152 (CRPKSQAKASTKAKPPAAAAPAAKGAQAPTKAPE) is disordered. The segment covering 121-152 (PKSQAKASTKAKPPAAAAPAAKGAQAPTKAPE) has biased composition (low complexity).

This sequence belongs to the eukaryotic ribosomal protein eL29 family. As to quaternary structure, component of the large ribosomal subunit.

It is found in the cytoplasm. Functionally, component of the large ribosomal subunit. The ribosome is a large ribonucleoprotein complex responsible for the synthesis of proteins in the cell. The polypeptide is Large ribosomal subunit protein eL29 (RPL29) (Bos taurus (Bovine)).